The primary structure comprises 392 residues: Formate-dependent phosphoribosylglycinamide formyltransferase (392 aa).

Residues 22 to 23 (EL) and Glu82 contribute to the N(1)-(5-phospho-beta-D-ribosyl)glycinamide site. ATP-binding positions include Arg114, Lys155, 160 to 165 (SSGKGQ), 195 to 198 (EGVV), and Glu203. The 190-residue stretch at 119-308 (RLAAEELQLP…EFALHVRAFL (190 aa)) folds into the ATP-grasp domain. Mg(2+) is bound by residues Glu267 and Glu279. N(1)-(5-phospho-beta-D-ribosyl)glycinamide-binding positions include Asp286, Lys355, and 362–363 (RR).

Belongs to the PurK/PurT family. As to quaternary structure, homodimer.

The enzyme catalyses N(1)-(5-phospho-beta-D-ribosyl)glycinamide + formate + ATP = N(2)-formyl-N(1)-(5-phospho-beta-D-ribosyl)glycinamide + ADP + phosphate + H(+). The protein operates within purine metabolism; IMP biosynthesis via de novo pathway; N(2)-formyl-N(1)-(5-phospho-D-ribosyl)glycinamide from N(1)-(5-phospho-D-ribosyl)glycinamide (formate route): step 1/1. Its function is as follows. Involved in the de novo purine biosynthesis. Catalyzes the transfer of formate to 5-phospho-ribosyl-glycinamide (GAR), producing 5-phospho-ribosyl-N-formylglycinamide (FGAR). Formate is provided by PurU via hydrolysis of 10-formyl-tetrahydrofolate. In Shigella flexneri, this protein is Formate-dependent phosphoribosylglycinamide formyltransferase.